A 529-amino-acid chain; its full sequence is Aldehyde dehydrogenase 1 (529 aa).

251–256 (GSTYVG) contacts NAD(+). Residues Glu273 and Cys307 contribute to the active site.

This sequence belongs to the aldehyde dehydrogenase family.

The catalysed reaction is an aldehyde + NAD(+) + H2O = a carboxylate + NADH + 2 H(+). The polypeptide is Aldehyde dehydrogenase 1 (Entamoeba histolytica (strain ATCC 30459 / HM-1:IMSS / ABRM)).